Reading from the N-terminus, the 505-residue chain is MFTSKSNSVSPSPSLEQADADALDISTKVQLYGVLWKRPFGRSSAKWSRRFFIIKESFLLYYSESERKSFETNKYFNIHPKGVIPLGGCLVEAREEPSMPYAMKISHQDFHGNVLLAAESEFEQTQWLEMLQESGKVTWKNAQLGEAMIKSLEAQGLQLAKEKQEYLDKLMEETEELCLQREQREELERLNQVLEAEKQQFEEVVQELRVEQEQIKRELELTARCLKGVEQEKKELRHLTESLQHTLEELSIEKKKTLEMLEEDKNQPQPLTNQSEQPPASDGLHSNLRQIEERMQELLAEKLLAEKRMKENEERSRALEEEREFYSSQSQALQNSLQELTAEKQQAERELKAEVKVRMDLERRLREAEAALRSLEQGLNSKVRNKEKEERMRADVSHLKRFFEECIRNAELEAKMPVIMKNSVYIHKAATRRIKSCRFHRRRSSTSWNDMKPSQSFMTSQLEANNIEELKEVAKRLSRDQRFRESIYHIMATQPGASALPRGGK.

Positions 28–136 constitute a PH domain; sequence KVQLYGVLWK…WLEMLQESGK (109 aa). Positions 146–391 form a coiled coil; sequence EAMIKSLEAQ…KVRNKEKEER (246 aa). The disordered stretch occupies residues 264–284; it reads DKNQPQPLTNQSEQPPASDGL. The segment covering 267-278 has biased composition (polar residues); sequence QPQPLTNQSEQP. R502 is modified (omega-N-methylarginine).

Belongs to the PLEKHD1 family.

The chain is Pleckstrin homology domain-containing family D member 1 (Plekhd1) from Mus musculus (Mouse).